The sequence spans 317 residues: Melanocyte-stimulating hormone receptor (317 aa).

Residues 1 to 37 (MAVQGSQRRLLGSLNSTPTAIPQLGLAANQTGARCLE) are Extracellular-facing. N-linked (GlcNAc...) asparagine glycosylation occurs at N29. The chain crosses the membrane as a helical span at residues 38–63 (VSIPDGLFLSLGLVSLVENMLVVATI). Over 64-72 (AKNRNLHSP) the chain is Cytoplasmic. A helical membrane pass occupies residues 73–93 (MYCFICCLALSDLLVSGSNVL). Topologically, residues 94-118 (ETAVILLLEAGALVARAAVLQQVDN) are extracellular. The chain crosses the membrane as a helical span at residues 119–140 (VIDVITCSSMLSSLCFLGAIAV). The Cytoplasmic portion of the chain corresponds to 141–163 (DRYISIFYALRYHSIVTLPRARR). The chain crosses the membrane as a helical span at residues 164–183 (AIAAIWVASVLFSTLFIAYC). The Extracellular portion of the chain corresponds to 184–191 (DHTAVLLC). The chain crosses the membrane as a helical span at residues 192-211 (LVVFFLAVLVLMAVLYVHML). Over 212–240 (ARACQHAQGIARLHKRQRPVHQGFGLKGA) the chain is Cytoplasmic. Residues 241 to 266 (VTLTILLGIFFLCWGPFFLHLTLIVL) traverse the membrane as a helical segment. Residues 267 to 279 (CPEHPTCGCIFKN) are Extracellular-facing. A helical transmembrane segment spans residues 280–300 (FNLFLALIICNAIIDPLIYAF). Topologically, residues 301 to 317 (HSQELRRTLKEVLTCSW) are cytoplasmic. C315 carries S-palmitoyl cysteine lipidation.

This sequence belongs to the G-protein coupled receptor 1 family. Interacts with MGRN1, but does not undergo MGRN1-mediated ubiquitination; this interaction competes with GNAS-binding and thus inhibits agonist-induced cAMP production. Interacts with OPN3; the interaction results in a decrease in MC1R-mediated cAMP signaling and ultimately a decrease in melanin production in melanocytes.

Its subcellular location is the cell membrane. In terms of biological role, receptor for MSH (alpha, beta and gamma) and ACTH. The activity of this receptor is mediated by G proteins which activate adenylate cyclase. Mediates melanogenesis, the production of eumelanin (black/brown) and phaeomelanin (red/yellow), via regulation of cAMP signaling in melanocytes. The polypeptide is Melanocyte-stimulating hormone receptor (MC1R) (Pan troglodytes (Chimpanzee)).